Reading from the N-terminus, the 891-residue chain is Dynein axonemal intermediate chain 3 (891 aa).

Over residues 1–17 the composition is skewed to basic residues; sequence MAPKQKKKTSRGKKRLK. The segment at 1–22 is disordered; the sequence is MAPKQKKKTSRGKKRLKPVLAA. WD repeat units lie at residues 395–435, 477–533, 670–709, and 713–753; these read ESPD…DRIE, GHKK…PLTP, IHDG…GPLL, and CAPK…HEPA. Positions 818–861 form a coiled coil; the sequence is LEYVEQRKKIREQEKKEMELEMAKKKVKTYQKSKEQMQAELKMD.

As to quaternary structure, interacts with ACTR2; this interaction reduces binding of the Arp2/3 complex to the VCA domain of nucleation promoting factors. Part of the multisubunit axonemal dynein complex formed at least of two heavy chains and a number of intermediate and light chains. Found in a associated with the catalytic heavy chain DNAH2, the intermediate chain DNAI4, and the light chain DYNLT1.

The protein localises to the cytoplasm. In terms of biological role, acts as a negative regulator of cell migration, invasion, and metastasis downstream of p53/TP53, through inhibition of Arp2/3 complex-mediated actin polymerization. Via its association with the multisubunit axonemal dynein complex, is potentially involved in the regulation of cilia function. May play a role in osteogenesis of dental tissue-derived mesenchymal stem cells. This is Dynein axonemal intermediate chain 3 from Homo sapiens (Human).